Reading from the N-terminus, the 416-residue chain is Glyceraldehyde-3-phosphate dehydrogenase, chloroplastic (416 aa).

The transit peptide at 1-78 (MAFVAPVSSV…APARTSNAPS (78 aa)) directs the protein to the chloroplast. Residues 90 to 91 (RI), Asp114, and Arg158 contribute to the NADP(+) site. D-glyceraldehyde 3-phosphate-binding positions include 232–234 (SCT), Thr263, Arg278, 291–292 (TG), and Arg314. The active-site Nucleophile is Cys233. NADP(+) is bound at residue Asn396.

It belongs to the glyceraldehyde-3-phosphate dehydrogenase family. Homotetramer.

The protein localises to the plastid. Its subcellular location is the chloroplast. It catalyses the reaction D-glyceraldehyde 3-phosphate + phosphate + NADP(+) = (2R)-3-phospho-glyceroyl phosphate + NADPH + H(+). It functions in the pathway carbohydrate biosynthesis; Calvin cycle. This Gracilaria gracilis (Red alga) protein is Glyceraldehyde-3-phosphate dehydrogenase, chloroplastic (GAPA).